Reading from the N-terminus, the 170-residue chain is Urease accessory protein UreE (170 aa).

The protein belongs to the UreE family.

The protein localises to the cytoplasm. Its function is as follows. Involved in urease metallocenter assembly. Binds nickel. Probably functions as a nickel donor during metallocenter assembly. This is Urease accessory protein UreE from Helicobacter pylori (strain J99 / ATCC 700824) (Campylobacter pylori J99).